Consider the following 310-residue polypeptide: p-hydroxybenzoic acid efflux pump subunit AaeA (310 aa).

Residues 12-32 (AITVVLVILAFIAIFNAWVYY) traverse the membrane as a helical segment.

Belongs to the membrane fusion protein (MFP) (TC 8.A.1) family.

The protein localises to the cell inner membrane. Its function is as follows. Forms an efflux pump with AaeB. This chain is p-hydroxybenzoic acid efflux pump subunit AaeA, found in Escherichia coli O7:K1 (strain IAI39 / ExPEC).